Reading from the N-terminus, the 199-residue chain is FMN-dependent NADH:quinone oxidoreductase 2 (199 aa).

Residues Ser-10, 17–19 (SDS), and 135–138 (TKGG) each bind FMN.

The protein belongs to the azoreductase type 1 family. In terms of assembly, homodimer. The cofactor is FMN.

The enzyme catalyses 2 a quinone + NADH + H(+) = 2 a 1,4-benzosemiquinone + NAD(+). It carries out the reaction N,N-dimethyl-1,4-phenylenediamine + anthranilate + 2 NAD(+) = 2-(4-dimethylaminophenyl)diazenylbenzoate + 2 NADH + 2 H(+). Quinone reductase that provides resistance to thiol-specific stress caused by electrophilic quinones. Its function is as follows. Also exhibits azoreductase activity. Catalyzes the reductive cleavage of the azo bond in aromatic azo compounds to the corresponding amines. This Mesoplasma florum (strain ATCC 33453 / NBRC 100688 / NCTC 11704 / L1) (Acholeplasma florum) protein is FMN-dependent NADH:quinone oxidoreductase 2.